A 229-amino-acid chain; its full sequence is GTP cyclohydrolase 1 (229 aa).

A disordered region spans residues 1-26 (MDAKIKPIRGTNPAEGRPEFQPAELE). Zn(2+) contacts are provided by Cys118, His121, and Cys189.

It belongs to the GTP cyclohydrolase I family. Toroid-shaped homodecamer, composed of two pentamers of five dimers.

The catalysed reaction is GTP + H2O = 7,8-dihydroneopterin 3'-triphosphate + formate + H(+). It participates in cofactor biosynthesis; 7,8-dihydroneopterin triphosphate biosynthesis; 7,8-dihydroneopterin triphosphate from GTP: step 1/1. The chain is GTP cyclohydrolase 1 from Rhodopseudomonas palustris (strain ATCC BAA-98 / CGA009).